We begin with the raw amino-acid sequence, 448 residues long: NADH oxidase (448 aa).

Residues 7-11, cysteine 42, valine 80, 110-113, and arginine 132 contribute to the FAD site; these read GSGAA and ATGA. Cysteine 42 (redox-active) is an active-site residue. Residues 152 to 167, glutamate 179, and glycine 243 each bind NAD(+); that span reads VAVV…MAYG. FAD-binding positions include 271 to 281, glycine 299, and threonine 300; that span reads TSIPNIYAVGD. Valine 328 lines the NAD(+) pocket. Tyrosine 423 provides a ligand contact to FAD.

The protein belongs to the class-III pyridine nucleotide-disulfide oxidoreductase family. FAD serves as cofactor.

It catalyses the reaction 2 NADH + O2 + 2 H(+) = 2 NAD(+) + 2 H2O. Functionally, catalyzes the four-electron reduction of molecular oxygen to water. This is NADH oxidase from Methanocaldococcus jannaschii (strain ATCC 43067 / DSM 2661 / JAL-1 / JCM 10045 / NBRC 100440) (Methanococcus jannaschii).